The following is a 119-amino-acid chain: Large ribosomal subunit protein uL18 (119 aa).

Belongs to the universal ribosomal protein uL18 family. As to quaternary structure, part of the 50S ribosomal subunit; part of the 5S rRNA/L5/L18/L25 subcomplex. Contacts the 5S and 23S rRNAs.

Functionally, this is one of the proteins that bind and probably mediate the attachment of the 5S RNA into the large ribosomal subunit, where it forms part of the central protuberance. The protein is Large ribosomal subunit protein uL18 of Clostridium botulinum (strain Okra / Type B1).